A 507-amino-acid polypeptide reads, in one-letter code: Beta-glucosidase 12 (507 aa).

The signal sequence occupies residues 1-22; it reads MRTIYLSLLVFIIVLALNEVMA. Glutamine 50 serves as a coordination point for a beta-D-glucoside. The N-linked (GlcNAc...) asparagine glycan is linked to asparagine 81. Residues histidine 154 and 199–200 contribute to the a beta-D-glucoside site; that span reads NE. Residue glutamate 200 is the Proton donor of the active site. A disulfide bridge connects residues cysteine 219 and cysteine 227. A glycan (N-linked (GlcNAc...) asparagine) is linked at asparagine 226. Position 344 (tyrosine 344) interacts with a beta-D-glucoside. The N-linked (GlcNAc...) asparagine glycan is linked to asparagine 358. Residues glutamate 414, tryptophan 459, 466-467, and phenylalanine 475 contribute to the a beta-D-glucoside site; that span reads EW. The Nucleophile role is filled by glutamate 414.

The protein belongs to the glycosyl hydrolase 1 family.

The enzyme catalyses Hydrolysis of terminal, non-reducing beta-D-glucosyl residues with release of beta-D-glucose.. In Arabidopsis thaliana (Mouse-ear cress), this protein is Beta-glucosidase 12.